The chain runs to 626 residues: Chaperone protein DnaK (626 aa).

T197 bears the Phosphothreonine; by autocatalysis mark. Residues 595–614 (QNMAQQQQAQGGAQQQNQNK) show a composition bias toward low complexity. Residues 595–626 (QNMAQQQQAQGGAQQQNQNKGGDDDVIDAEVE) are disordered.

Belongs to the heat shock protein 70 family.

Acts as a chaperone. The sequence is that of Chaperone protein DnaK from Nautilia profundicola (strain ATCC BAA-1463 / DSM 18972 / AmH).